The chain runs to 487 residues: 4-alpha-glucanotransferase (487 aa).

This sequence belongs to the disproportionating enzyme family.

It localises to the cytoplasm. The enzyme catalyses Transfers a segment of a (1-&gt;4)-alpha-D-glucan to a new position in an acceptor, which may be glucose or a (1-&gt;4)-alpha-D-glucan.. Functionally, catalyzes a disproportionation reaction in which single or multiple glucose units from oligosaccharides are transferred to the 4-hydroxyl group of acceptor sugars. Glucose, maltose and maltotriose can act as acceptor, whereas of the three only maltotriose can act as donor. The polypeptide is 4-alpha-glucanotransferase (malQ) (Clostridium butyricum).